The chain runs to 282 residues: MTLFEAIILGIVQGLTEFLPISSTAHLRIVPALAGWQDPGAAFSAIVQIGTLAAVLIYFYKDIHSITRGVFDGLRSGRPFETQESRMGWMIAAGTMPIVILGLLFKTEIETSLRSLYWISVALIVLALMLTLAEWLMKRRADKGLKAKTMNDIGWKEALLIGLAQSIALIPGSSRSGVTITGGLFLNLSRETAARFSFLLSLPAVFAAGIYQLYETRDQLMASGSDLLNLAVATLFAGIVGYASIAFLINYLKQHSTALFILYRIALGVGILGLIANGYLQA.

Helical transmembrane passes span 40–60, 87–107, 116–136, 153–173, 196–216, 229–249, and 256–276; these read GAAFSAIVQIGTLAAVLIYFY, MGWMIAAGTMPIVILGLLFKT, LYWISVALIVLALMLTLAEWL, IGWKEALLIGLAQSIALIPGS, FSFLLSLPAVFAAGIYQLYET, NLAVATLFAGIVGYASIAFLI, and STALFILYRIALGVGILGLIA.

It belongs to the UppP family.

The protein resides in the cell inner membrane. The enzyme catalyses di-trans,octa-cis-undecaprenyl diphosphate + H2O = di-trans,octa-cis-undecaprenyl phosphate + phosphate + H(+). Functionally, catalyzes the dephosphorylation of undecaprenyl diphosphate (UPP). Confers resistance to bacitracin. This Chlorobium phaeobacteroides (strain BS1) protein is Undecaprenyl-diphosphatase.